A 473-amino-acid polypeptide reads, in one-letter code: TOX high mobility group box family member 2 (473 aa).

Disordered regions lie at residues 1-42, 139-211, 277-302, and 340-473; these read MSDG…SLLH, GLRS…VSAY, SKSP…PPKQ, and LLPG…PSAR. The segment covering 8–20 has biased composition (polar residues); the sequence is LLSTSQTYNSQGE. The tract at residues 25-63 is required for transcriptional activation; it reads YEIPPITPPNLPEPSLLHLGDHEAGYHSLCHGLAPNGLL. A compositionally biased stretch (low complexity) spans 153–164; that stretch reads GSKSATPSPSSS. Basic and acidic residues predominate over residues 171–188; the sequence is DAHFKISGEKRPSTDPGK. The short motif at 172–201 is the Nuclear localization signal element; that stretch reads AHFKISGEKRPSTDPGKKAKNPKKKKKKDP. A compositionally biased stretch (basic residues) spans 189–199; it reads KAKNPKKKKKK. The segment at residues 204–272 is a DNA-binding region (HMG box); it reads PQKPVSAYAL…EYLKALAAYR (69 aa). Composition is skewed to low complexity over residues 373-382 and 415-440; these read LLSPPLSMSP and SDFP…WDGS. The span at 463–473 shows a compositional bias: polar residues; the sequence is SPKNLQEPSAR.

As to expression, highly expressed in ovary, where it is restricted to undifferentiated granulosa cells. Expressed in hypothalamus, pituitary gland, testis and uterus.

It localises to the nucleus. Its function is as follows. Putative transcriptional activator involved in the hypothalamo-pituitary-gonadal system. The chain is TOX high mobility group box family member 2 (Tox2) from Rattus norvegicus (Rat).